A 95-amino-acid chain; its full sequence is Protein TusB (95 aa).

It belongs to the DsrH/TusB family. As to quaternary structure, heterohexamer, formed by a dimer of trimers. The hexameric TusBCD complex contains 2 copies each of TusB, TusC and TusD. The TusBCD complex interacts with TusE.

The protein resides in the cytoplasm. Functionally, part of a sulfur-relay system required for 2-thiolation of 5-methylaminomethyl-2-thiouridine (mnm(5)s(2)U) at tRNA wobble positions. The protein is Protein TusB of Shigella flexneri.